The sequence spans 361 residues: 3-dehydroquinate synthase (361 aa).

NAD(+) contacts are provided by residues 104–108, 128–129, K140, and K149; these read GVIGD and TT. Zn(2+)-binding residues include E182, H245, and H262.

It belongs to the sugar phosphate cyclases superfamily. Dehydroquinate synthase family. The cofactor is NAD(+). Co(2+) serves as cofactor. Zn(2+) is required as a cofactor.

It localises to the cytoplasm. The catalysed reaction is 7-phospho-2-dehydro-3-deoxy-D-arabino-heptonate = 3-dehydroquinate + phosphate. Its pathway is metabolic intermediate biosynthesis; chorismate biosynthesis; chorismate from D-erythrose 4-phosphate and phosphoenolpyruvate: step 2/7. Catalyzes the conversion of 3-deoxy-D-arabino-heptulosonate 7-phosphate (DAHP) to dehydroquinate (DHQ). The chain is 3-dehydroquinate synthase from Halalkalibacterium halodurans (strain ATCC BAA-125 / DSM 18197 / FERM 7344 / JCM 9153 / C-125) (Bacillus halodurans).